The primary structure comprises 89 residues: Small ribosomal subunit protein uS15 (89 aa).

The protein belongs to the universal ribosomal protein uS15 family. As to quaternary structure, part of the 30S ribosomal subunit. Forms a bridge to the 50S subunit in the 70S ribosome, contacting the 23S rRNA.

Functionally, one of the primary rRNA binding proteins, it binds directly to 16S rRNA where it helps nucleate assembly of the platform of the 30S subunit by binding and bridging several RNA helices of the 16S rRNA. In terms of biological role, forms an intersubunit bridge (bridge B4) with the 23S rRNA of the 50S subunit in the ribosome. The chain is Small ribosomal subunit protein uS15 from Thermodesulfovibrio yellowstonii (strain ATCC 51303 / DSM 11347 / YP87).